A 126-amino-acid polypeptide reads, in one-letter code: Small ribosomal subunit protein uS12 (126 aa).

Residues 1–28 (MPTINQLVRKGRRKVRTKSKSPALDGNP) form a disordered region. Basic residues predominate over residues 9–19 (RKGRRKVRTKS). D89 is subject to 3-methylthioaspartic acid. The tract at residues 106 to 126 (GVEKRRRSRSKYGVKRPKAAK) is disordered. Residues 109-126 (KRRRSRSKYGVKRPKAAK) show a composition bias toward basic residues.

The protein belongs to the universal ribosomal protein uS12 family. As to quaternary structure, part of the 30S ribosomal subunit. Contacts proteins S8 and S17. May interact with IF1 in the 30S initiation complex.

Functionally, with S4 and S5 plays an important role in translational accuracy. Interacts with and stabilizes bases of the 16S rRNA that are involved in tRNA selection in the A site and with the mRNA backbone. Located at the interface of the 30S and 50S subunits, it traverses the body of the 30S subunit contacting proteins on the other side and probably holding the rRNA structure together. The combined cluster of proteins S8, S12 and S17 appears to hold together the shoulder and platform of the 30S subunit. The chain is Small ribosomal subunit protein uS12 from Opitutus terrae (strain DSM 11246 / JCM 15787 / PB90-1).